Reading from the N-terminus, the 151-residue chain is Globin-2 B chain (151 aa).

The residue at position 1 (Ser-1) is an N-acetylserine. The region spanning 11–151 (VSNADQKDLL…SLVAVVQASL (141 aa)) is the Globin domain. Residue His-103 coordinates heme b.

This sequence belongs to the globin family. In terms of assembly, heterotetramer of two alpha chains and two beta chains.

This is Globin-2 B chain from Anadara inaequivalvis (Inequivalve ark).